The following is a 312-amino-acid chain: Acetyl-coenzyme A carboxylase carboxyl transferase subunit alpha (312 aa).

Residues 36-286 form the CoA carboxyltransferase C-terminal domain; that stretch reads RLEKEVKSIY…KEYFLDALRT (251 aa).

Belongs to the AccA family. Acetyl-CoA carboxylase is a heterohexamer composed of biotin carboxyl carrier protein (AccB), biotin carboxylase (AccC) and two subunits each of ACCase subunit alpha (AccA) and ACCase subunit beta (AccD).

It localises to the cytoplasm. It catalyses the reaction N(6)-carboxybiotinyl-L-lysyl-[protein] + acetyl-CoA = N(6)-biotinyl-L-lysyl-[protein] + malonyl-CoA. It participates in lipid metabolism; malonyl-CoA biosynthesis; malonyl-CoA from acetyl-CoA: step 1/1. In terms of biological role, component of the acetyl coenzyme A carboxylase (ACC) complex. First, biotin carboxylase catalyzes the carboxylation of biotin on its carrier protein (BCCP) and then the CO(2) group is transferred by the carboxyltransferase to acetyl-CoA to form malonyl-CoA. The chain is Acetyl-coenzyme A carboxylase carboxyl transferase subunit alpha from Helicobacter pylori (strain P12).